The chain runs to 1678 residues: Nuclear pore complex protein Nup98-Nup96 (1678 aa).

Over residues 1–11 the composition is skewed to low complexity; that stretch reads MFGQNKSFGSS. Disordered stretches follow at residues 1-41, 68-100, 301-366, 441-473, and 603-631; these read MFGQ…QPAN, SSIF…FGST, TTGS…GAPA, FGNT…TQAT, and SKEA…RSVH. The span at 12 to 22 shows a compositional bias: gly residues; that stretch reads SFGGGSSGSGL. 2 stretches are compositionally biased toward low complexity: residues 23–38 and 73–83; these read FGQN…LFGQ and SPQQPQNNQSS. The span at 306–329 shows a compositional bias: polar residues; sequence LFGNQQPQTNTGGSLFGNTQNQNQ. A compositionally biased stretch (low complexity) spans 345–366; it reads FGQAQQQPQQQSSGFSFGGAPA. 2 stretches are compositionally biased toward polar residues: residues 456–473 and 615–628; these read SQPQ…TQAT and RNST…LTNR. Residues 777–919 form the Peptidase S59 domain; it reads KPDYFSLPTI…GSWVFRVDHF (143 aa). Serine 920 functions as the Nucleophile in the catalytic mechanism.

The protein belongs to the nucleoporin GLFG family. Part of the NPC. Post-translationally, the Nup98 and Nup96 chains are autoproteolytically processed from a single precursor protein.

It is found in the cytoplasmic granule. Its subcellular location is the nucleus membrane. The protein resides in the nucleus. It localises to the nuclear pore complex. The protein localises to the nucleus envelope. It is found in the chromosome. Its function is as follows. Nup98 and Nup96 play a role in the bidirectional transport across the nucleoporin complex (NPC). Required for the nuclear import of hcp-4 during mitotic prophase, this step is essential for centrosome assembly and resolution. Regulates nucleoporin npp-5 localization to the nuclear membrane during interphase and to kinetochores during metaphase. Has a role in P granule integrity; may promote the 'liquid phase' of P granules by increasing the number of interacting RNA-protein complexes. Binds nos-2 mRNA, probably indirectly, and promotes its accumulation in P granules. In Caenorhabditis elegans, this protein is Nuclear pore complex protein Nup98-Nup96.